Reading from the N-terminus, the 273-residue chain is 4-hydroxy-tetrahydrodipicolinate reductase (273 aa).

12–17 (GSGGRM) is a binding site for NAD(+). Arg39 contributes to the NADP(+) binding site. Residues 102–104 (GTT) and 126–129 (AANF) each bind NAD(+). Catalysis depends on His159, which acts as the Proton donor/acceptor. His160 is a (S)-2,3,4,5-tetrahydrodipicolinate binding site. Lys163 serves as the catalytic Proton donor. 169–170 (GT) lines the (S)-2,3,4,5-tetrahydrodipicolinate pocket.

This sequence belongs to the DapB family. Homotetramer.

The protein resides in the cytoplasm. It carries out the reaction (S)-2,3,4,5-tetrahydrodipicolinate + NAD(+) + H2O = (2S,4S)-4-hydroxy-2,3,4,5-tetrahydrodipicolinate + NADH + H(+). The catalysed reaction is (S)-2,3,4,5-tetrahydrodipicolinate + NADP(+) + H2O = (2S,4S)-4-hydroxy-2,3,4,5-tetrahydrodipicolinate + NADPH + H(+). It participates in amino-acid biosynthesis; L-lysine biosynthesis via DAP pathway; (S)-tetrahydrodipicolinate from L-aspartate: step 4/4. Its function is as follows. Catalyzes the conversion of 4-hydroxy-tetrahydrodipicolinate (HTPA) to tetrahydrodipicolinate. This Serratia proteamaculans (strain 568) protein is 4-hydroxy-tetrahydrodipicolinate reductase.